Here is a 664-residue protein sequence, read N- to C-terminus: Methionine--tRNA ligase (664 aa).

Positions 15-25 match the 'HIGH' region motif; it reads YYPSGKAHIGH. Residues 310–314 carry the 'KMSKS' region motif; that stretch reads KMSKS. Lys-313 is a binding site for ATP. The tRNA-binding domain maps to 563–664; it reads DFDKIDLRVA…SALPNGAKVK (102 aa).

It belongs to the class-I aminoacyl-tRNA synthetase family. MetG type 2B subfamily. Homodimer.

The protein resides in the cytoplasm. It catalyses the reaction tRNA(Met) + L-methionine + ATP = L-methionyl-tRNA(Met) + AMP + diphosphate. In terms of biological role, is required not only for elongation of protein synthesis but also for the initiation of all mRNA translation through initiator tRNA(fMet) aminoacylation. This chain is Methionine--tRNA ligase (metG), found in Listeria monocytogenes serovar 1/2a (strain ATCC BAA-679 / EGD-e).